The sequence spans 159 residues: Large ribosomal subunit protein uL15 (159 aa).

A disordered region spans residues 1-39 (MKLNELSPADGSTKKRMRVGRGVGSGKGKTAGRGVKGQN). Over residues 21 to 35 (RGVGSGKGKTAGRGV) the composition is skewed to gly residues.

The protein belongs to the universal ribosomal protein uL15 family. As to quaternary structure, part of the 50S ribosomal subunit.

Functionally, binds to the 23S rRNA. The sequence is that of Large ribosomal subunit protein uL15 from Hyphomonas neptunium (strain ATCC 15444).